A 474-amino-acid chain; its full sequence is GSASAPTLFPLVSCENSPSDTSSVAVGCLAQDFLPDSITFSWKYKNNSDISSTRGFPSVLRGGKYAATSQVLLPSKDVMQGTDEHVVCKVQHPNGNKEKNVPLPVIAELPPKVSVFVPPRDGFFGNPRKSKLICQATGFSPRQIQVSWLREGKQVGSGVTTDQVQAEAKESGPTTYKVTSTLTIKESDWLGQSMFTCRVDHRGLTFQQNASSMCVPDQDTAIRVFAIPPSFASIFLTKSTKLTCLVTDLTTYDSVTISWTRQNGEAVKTHTNISESHPNATFSAVGEASICEDDWNSGERFTCTVTHTDLPSPLKQTISRPKGVALHRPDVYLLPPAREQLNLRESATITCLVTGFSPADVFVQWMQRGQPLSPEKYVTSAPMPEPQAPGRYFAHSILTVSEEEWNTGETYTCVVAHEALPNRVTERTVDKSTEGEVSADEEGFENLWATASTFIVLFLLSLFYSTTVTLFKVK.

The segment at 1 to 105 is CH1; sequence GSASAPTLFP…NKEKNVPLPV (105 aa). Over 1-450 the chain is Extracellular; that stretch reads GSASAPTLFP…EEGFENLWAT (450 aa). 4 Ig-like domains span residues 6 to 102, 111 to 211, 229 to 319, and 329 to 430; these read PTLF…KNVP, PKVS…QNAS, PSFA…QTIS, and PDVY…RTVD. 2 cysteine pairs are disulfide-bonded: Cys28/Cys88 and Cys134/Cys197. The N-linked (GlcNAc...) (complex) asparagine glycan is linked to Asn46. The tract at residues 106 to 217 is CH2; it reads IAELPPKVSV…QNASSMCVPD (112 aa). The N-linked (GlcNAc...) (complex) asparagine glycan is linked to Asn209. The CH3 stretch occupies residues 218 to 323; it reads QDTAIRVFAI…LKQTISRPKG (106 aa). Cystine bridges form between Cys244–Cys303 and Cys351–Cys413. 2 N-linked (GlcNAc...) asparagine glycosylation sites follow: Asn272 and Asn279. The interval 324–452 is CH4; the sequence is VALHRPDVYL…GFENLWATAS (129 aa). An important for IgM oligomerization region spans residues 437-453; it reads VSADEEGFENLWATAST. Asp440 carries N-linked (GlcNAc...) asparagine glycosylation. The helical transmembrane segment at 451 to 471 threads the bilayer; sequence ASTFIVLFLLSLFYSTTVTLF. At 472 to 474 the chain is on the cytoplasmic side; it reads KVK.

As to quaternary structure, the basic structural unit of both sIgM and mIgM molecules consists of two identical heavy chains and two identical light chains; disulfide-linked. N-terminal variable regions of the heavy and light chains form the antigen binding sites, whereas the C-terminal constant regions of the heavy chains interact with immune receptors to mediate effector functions. Part of IgM antibody. Forms high order oligomers, homopentamers stabilized by the JCHAIN and homohexamers that lack JCHAIN. The oligomerization amplifies an inherently low affinity of IgM antibodies for the antigen by multi-point attachment (avidity). Adjacent IgM protomers associate via interchain disulfide links to form an asymmetric pentameric structure with a 50 degree gap. A single copy of JCHAIN is covalently linked to the first and the fifth IgM monomers via interchain disulfide bonds thus closing the pentamer ring. Only JCHAIN-containing IgM binds PIGR secretory component (via D1-CDR1 region); this interaction is a prerequisite for IgM transcytosis across mucosal epithelium. Pentameric sIgM interacts (via CH4 domain) with FCRM (via Ig-like domain); the interaction is glycan-independent and multivalent theoretically involving up to eight binding sites for the IgM pentamer. Interacts with FCAMR; this interaction facilitates the endocytosis of IgM-coated microbes or IgM-antigen immune complexes. Antigen-bound IgM (via the Fc region) binds to globular domains of C1q component of the complement system, all three modules C1QA, C1QB and C1QC being involved in IgM binding; this interaction is multivalent. Pentameric sIgM (via Fc region) interacts with CD5L (via SRCR2) through interchain disulfide-linkages; this interaction protects CD5L from renal excretion and provides for high levels of CD5L in circulation. In terms of assembly, part of IgM B cell receptor complex on pre-B cells, immature and mature B cells. The BCR complex consists of one membrane-bound IgM molecule responsible for antigen binding, non-covalently associated with CD79A and CD79B signaling chains. Post-translationally, N-glycosylated; important for IgM secretion and its localization at the plasma membrane. The interaction with FCMR is glycan-independent.

It is found in the secreted. It localises to the cell membrane. In terms of biological role, constant region of immunoglobulin heavy chains. Immunoglobulins, also known as antibodies, are membrane-bound or secreted glycoproteins produced by B lymphocytes. In the recognition phase of humoral immunity, the membrane-bound immunoglobulins serve as receptors which, upon binding of a specific antigen, trigger the clonal expansion and differentiation of B lymphocytes into immunoglobulins-secreting plasma cells. Secreted immunoglobulins mediate the effector phase of humoral immunity, which results in the elimination of bound antigens. The antigen binding site is formed by the variable domain of one heavy chain, together with that of its associated light chain. Thus, each immunoglobulin has two antigen binding sites with remarkable affinity for a particular antigen. The variable domains are assembled by a process called V-(D)-J rearrangement and can then be subjected to somatic hypermutations which, after exposure to antigen and selection, allow affinity maturation for a particular antigen. Constant region of secreted IgM (sIgM), also known as the Fc region of IgM antibody. Able to multimerize, forms high order polymers, mainly pentamers and occasionally hexamers, providing for multivalency and high avidity recognition of antigens. Natural sIgM are polyreactive and recognize conserved self- and pathogen-derived structures, whereas immune sIgM are secreted only upon exposure to pathogens and are antigen-specific. Both natural and immune sIgM are required for an efficient humoral immune response to infection. Mediates sIgM effector functions mostly via Fc receptors and the complement system. On lymphoid cells binds high-affinity Fc receptor FCMR and promotes induction of an efficient neutralizing IgG response while maintaining tolerance to self-antigens. Recruits C1q complement component to initiate the classical complement pathway, facilitating the recognition and neutralization of pathogens by the host. Together with C1q and mannose-binding lectin promotes the phagocytosis of apoptotic cells by macrophages, ensuring the clearance of potential autoimmune epitopes from tissues. Involved in mucosal immunity. It is transported by transcytosis across mucosal epithelium by PIGR and secreted on the apical side in complex with PIGR secretory component to scan mucosal lining for pathogens. IgM-antigen complexes undergo FCMR-mediated retrotranscytosis across mucosal M cells toward antigen-presenting cells in mucosal lymphoid tissues. Its function is as follows. Constant region of membrane-bound IgM, part of the B cell receptor complex (BCR). IgM BCR provides constitutive tonic signaling for B cell survival. Mediates pre-BCR signaling that regulates B cell selection and rearrangement of Ig genes via allelic exclusion. This Homo sapiens (Human) protein is Immunoglobulin heavy constant mu.